A 342-amino-acid chain; its full sequence is Selenide, water dikinase (342 aa).

Cys-13 is a catalytic residue. Residues Lys-16 and 44-46 (SCD) each bind ATP. Asp-47 lines the Mg(2+) pocket. ATP contacts are provided by residues Asp-64, Asp-87, and 134-136 (GHS). Asp-87 is a binding site for Mg(2+). Asp-222 lines the Mg(2+) pocket.

The protein belongs to the selenophosphate synthase 1 family. Class I subfamily. In terms of assembly, homodimer. Mg(2+) serves as cofactor.

The catalysed reaction is hydrogenselenide + ATP + H2O = selenophosphate + AMP + phosphate + 2 H(+). Functionally, synthesizes selenophosphate from selenide and ATP. This chain is Selenide, water dikinase, found in Agathobacter rectalis (strain ATCC 33656 / DSM 3377 / JCM 17463 / KCTC 5835 / VPI 0990) (Eubacterium rectale).